The sequence spans 657 residues: Probable alpha-galactosidase D (657 aa).

The signal sequence occupies residues 1–16 (MLPKIFYLSLLPAALG). N-linked (GlcNAc...) asparagine glycosylation is found at N47 and N91. C124 and C157 are oxidised to a cystine. Catalysis depends on D155, which acts as the Nucleophile. N-linked (GlcNAc...) asparagine glycosylation is found at N182 and N191. 200 to 204 (EWGID) is a substrate binding site. The active-site Proton donor is D222. N-linked (GlcNAc...) asparagine glycosylation is found at N291, N438, N460, N505, N539, N543, and N582.

This sequence belongs to the glycosyl hydrolase 27 family.

It localises to the secreted. It catalyses the reaction Hydrolysis of terminal, non-reducing alpha-D-galactose residues in alpha-D-galactosides, including galactose oligosaccharides, galactomannans and galactolipids.. Hydrolyzes a variety of simple alpha-D-galactoside as well as more complex molecules such as oligosaccharides and polysaccharides. This Aspergillus oryzae (strain ATCC 42149 / RIB 40) (Yellow koji mold) protein is Probable alpha-galactosidase D (aglD).